The primary structure comprises 1405 residues: DNA-directed RNA polymerase subunit beta' (1405 aa).

Zn(2+) contacts are provided by cysteine 65, cysteine 67, cysteine 80, and cysteine 83. Mg(2+)-binding residues include aspartate 468, aspartate 470, and aspartate 472. Zn(2+) contacts are provided by cysteine 811, cysteine 885, cysteine 892, and cysteine 895.

The protein belongs to the RNA polymerase beta' chain family. As to quaternary structure, the RNAP catalytic core consists of 2 alpha, 1 beta, 1 beta' and 1 omega subunit. When a sigma factor is associated with the core the holoenzyme is formed, which can initiate transcription. Mg(2+) serves as cofactor. The cofactor is Zn(2+).

The catalysed reaction is RNA(n) + a ribonucleoside 5'-triphosphate = RNA(n+1) + diphosphate. Its function is as follows. DNA-dependent RNA polymerase catalyzes the transcription of DNA into RNA using the four ribonucleoside triphosphates as substrates. The protein is DNA-directed RNA polymerase subunit beta' of Azobacteroides pseudotrichonymphae genomovar. CFP2.